A 438-amino-acid polypeptide reads, in one-letter code: UDP-N-acetyl-D-mannosamine dehydrogenase (438 aa).

6 residues coordinate NAD(+): tyrosine 21, isoleucine 22, aspartate 41, arginine 46, threonine 93, and threonine 131. Arginine 160, valine 161, lysine 212, asparagine 216, arginine 219, histidine 250, arginine 252, and glycine 263 together coordinate UDP-N-acetyl-alpha-D-mannosaminouronate. The active-site Proton donor/acceptor is lysine 212. Cysteine 266 serves as the catalytic Nucleophile. Residues tyrosine 323 and lysine 324 each contribute to the UDP-N-acetyl-alpha-D-mannosaminouronate site. Arginine 331 serves as a coordination point for NAD(+). Lysine 409 is a UDP-N-acetyl-alpha-D-mannosaminouronate binding site.

This sequence belongs to the UDP-glucose/GDP-mannose dehydrogenase family. As to quaternary structure, homotetramer; probably dimer of dimers.

The enzyme catalyses UDP-N-acetyl-alpha-D-mannosamine + 2 NAD(+) + H2O = UDP-N-acetyl-alpha-D-mannosaminouronate + 2 NADH + 3 H(+). In terms of biological role, catalyzes the four-electron oxidation of UDP-N-acetyl-D-mannosamine (UDP-ManNAc), reducing NAD(+) and releasing UDP-N-acetylmannosaminuronic acid (UDP-ManNAcA). The polypeptide is UDP-N-acetyl-D-mannosamine dehydrogenase (wecC) (Methanococcus aeolicus (strain ATCC BAA-1280 / DSM 17508 / OCM 812 / Nankai-3)).